The chain runs to 108 residues: MFTLRAASRRAFSTSIARRNLISEAYTREVRAFKAPKLSAKDAEGQVKPWSAPSAPKPPVVEGADAAELQAYAEAPVDVEGQTNSKSASPQANDEDWLAFEEEEGVAV.

The transit peptide at 1-19 (MFTLRAASRRAFSTSIARR) directs the protein to the mitochondrion. Disordered stretches follow at residues 40 to 60 (AKDA…KPPV) and 75 to 108 (APVD…GVAV). Residues 47–60 (VKPWSAPSAPKPPV) show a composition bias toward low complexity. Over residues 81 to 92 (GQTNSKSASPQA) the composition is skewed to polar residues. The segment covering 93 to 108 (NDEDWLAFEEEEGVAV) has biased composition (acidic residues).

As to quaternary structure, F-type ATP synthases have 2 components, the catalytic core F(1) and the membrane-embedded component F(0), linked together by a central stalk and a peripheral stalk. The central stalk, also called rotor shaft, is often seen as part of F(1). The peripheral stalk is seen as part of F(0). F(0) contains the membrane channel next to the rotor. F-type ATP synthases form dimers but each monomer functions independently in ATP generation. The dimer consists of 17 different polypeptides: ATP1 (subunit alpha, 3 molecules per monomer, part of F(1)), ATP2 (subunit beta, 3 copies per monomer, part of F(1)), ATP3 (subunit gamma, part of the central stalk), ATP4 (subunit b, part of the peripheral stalk), ATP5/OSCP (subunit 5/OSCP, part of the peripheral stalk), ATP6 (subunit a, part of the peripheral stalk), ATP7 (subunit d, part of the peripheral stalk), ATP8 (subunit 8, part of the peripheral stalk), OLI1 (subunit c, part of the rotor, 10 molecules per monomer), ATP14 (subunit H, part of the peripheral stalk), ATP15 (subunit epsilon, part of the central stalk), ATP16 (subunit delta, part of the central stalk), ATP17 (subunit f, part of the peripheral stalk), ATP18 (subunit i/j, part of the peripheral stalk), ATP19 (subunit k, dimer-specific, at interface between monomers), ATP20 (subunit g, at interface between monomers), TIM11 (subunit e, at interface between monomers).

Its subcellular location is the mitochondrion inner membrane. In terms of biological role, mitochondrial membrane ATP synthase (F(1)F(0) ATP synthase or Complex V) produces ATP from ADP in the presence of a proton gradient across the membrane which is generated by electron transport complexes of the respiratory chain. F-type ATP synthases consist of two structural domains, F(1) - containing the extramembraneous catalytic core, and F(0) - containing the membrane proton channel, linked together by a central stalk and a peripheral stalk. During catalysis, ATP synthesis in the catalytic domain of F(1) is coupled via a rotary mechanism of the central stalk subunits to proton translocation. Part of the peripheral stalk. In Yarrowia lipolytica (strain CLIB 122 / E 150) (Yeast), this protein is ATP synthase subunit H, mitochondrial.